The following is a 422-amino-acid chain: 5-hydroxytryptamine receptor 1A (422 aa).

The tract at residues 1 to 23 is disordered; it reads MDVLSPGQGNNTTSPPAPFETGG. Over 1–38 the chain is Extracellular; the sequence is MDVLSPGQGNNTTSPPAPFETGGNTTGISDVTVSYQVI. N-linked (GlcNAc...) asparagine glycans are attached at residues N10, N11, and N24. Residues 39–59 traverse the membrane as a helical segment; it reads TSLLLGTLIFCAVLGNACVVA. Residues 60 to 73 are Cytoplasmic-facing; it reads AIALERSLQNVANY. The chain crosses the membrane as a helical span at residues 74-98; sequence LIGSLAVTDLMVSVLVLPMAALYQV. Residues 99-107 are Extracellular-facing; sequence LNKWTLGQV. A helical membrane pass occupies residues 108 to 132; that stretch reads TCDLFIALDVLCCTSSILHLCAIAL. A disulfide bond links C109 and C187. Residues D116 and C120 each contribute to the serotonin site. The short motif at 133–135 is the DRY motif; important for ligand-induced conformation changes element; sequence DRY. Over 133–152 the chain is Cytoplasmic; that stretch reads DRYWAITDPIDYVNKRTPRR. Residues 153 to 174 form a helical membrane-spanning segment; sequence AAALISLTWLIGFLISIPPMLG. Residues 175–193 are Extracellular-facing; sequence WRTPEDRSDPDACTISKDH. The helical transmembrane segment at 194 to 216 threads the bilayer; that stretch reads GYTIYSTFGAFYIPLLLMLVLYG. Topologically, residues 217 to 346 are cytoplasmic; it reads RIFRAARFRI…LARERKTVKT (130 aa). The segment at 235 to 262 is disordered; the sequence is KTGADTRHGASPAPQPKKSVNGESGSRN. 1D-myo-inositol 4-phosphate-binding residues include T314, K345, T346, and G352. Residues 347–370 form a helical membrane-spanning segment; sequence LGIIMGTFILCWLPFFIVALVLPF. The Extracellular portion of the chain corresponds to 371 to 378; sequence CESSCHMP. Residues 379–403 form a helical membrane-spanning segment; the sequence is TLLGAIINWLGYSNSLLNPVIYAYF. Residues 396–400 carry the NPxxY motif; important for ligand-induced conformation changes and signaling motif; that stretch reads NPVIY. 1D-myo-inositol 4-phosphate-binding residues include F403, N404, and K405. The Cytoplasmic segment spans residues 404 to 422; it reads NKDFQNAFKKIIKCKFCRQ.

Belongs to the G-protein coupled receptor 1 family. 5-hydroxytryptamine receptor subfamily. HTR1A sub-subfamily. Heterodimer; heterodimerizes with GPER1. Interacts with YIF1B. Interacts with GPR39 and GALR1. As to expression, detected in lymph nodes, thymus and spleen. Detected in activated T-cells, but not in resting T-cells.

The protein localises to the cell membrane. Its subcellular location is the cell projection. It is found in the dendrite. G-protein coupled receptor activity is regulated by lipids: phosphatidylinositol 4-phosphate increases HTR1A-mediated activity. Binding to aripiprazol drug is regulated by cholesterol, which shapes the ligand-binding pocket, determining the specificity for aripiprazol. Activated by IHCH-7179 small molecule: IHCH-7179 acts both as an agonist activator for HTR1A and as an antagonist inhibitor for HTR2A. Activated by SEP-363856 small molecule: IHCH-7179 acts both as an agonist activator for HTR1A and TAAR1. Functionally, G-protein coupled receptor for 5-hydroxytryptamine (serotonin). Also functions as a receptor for various drugs and psychoactive substances. Ligand binding causes a conformation change that triggers signaling via guanine nucleotide-binding proteins (G proteins) and modulates the activity of downstream effectors, such as adenylate cyclase. HTR1A is coupled to G(i)/G(o) G alpha proteins and mediates inhibitory neurotransmission: signaling inhibits adenylate cyclase activity and activates a phosphatidylinositol-calcium second messenger system that regulates the release of Ca(2+) ions from intracellular stores. Beta-arrestin family members regulate signaling by mediating both receptor desensitization and resensitization processes. Plays a role in the regulation of 5-hydroxytryptamine release and in the regulation of dopamine and 5-hydroxytryptamine metabolism. Plays a role in the regulation of dopamine and 5-hydroxytryptamine levels in the brain, and thereby affects neural activity, mood and behavior. Plays a role in the response to anxiogenic stimuli. This Homo sapiens (Human) protein is 5-hydroxytryptamine receptor 1A.